A 192-amino-acid chain; its full sequence is Fe/S biogenesis protein NfuA (192 aa).

[4Fe-4S] cluster-binding residues include C149 and C152.

The protein belongs to the NfuA family. Homodimer. [4Fe-4S] cluster serves as cofactor.

Involved in iron-sulfur cluster biogenesis. Binds a 4Fe-4S cluster, can transfer this cluster to apoproteins, and thereby intervenes in the maturation of Fe/S proteins. Could also act as a scaffold/chaperone for damaged Fe/S proteins. In Alteromonas mediterranea (strain DSM 17117 / CIP 110805 / LMG 28347 / Deep ecotype), this protein is Fe/S biogenesis protein NfuA.